We begin with the raw amino-acid sequence, 308 residues long: Cobalamin biosynthesis protein CobD (308 aa).

Transmembrane regions (helical) follow at residues 1–21, 50–70, 71–91, 151–171, 202–222, and 284–304; these read MEIL…GDPP, FVYG…PVYF, LLDW…AILF, IGDG…PGVM, VLNF…SFFG, and LVLI…VIYF.

The protein belongs to the CobD/CbiB family.

Its subcellular location is the cell membrane. The protein operates within cofactor biosynthesis; adenosylcobalamin biosynthesis. Its function is as follows. Converts cobyric acid to cobinamide by the addition of aminopropanol on the F carboxylic group. The sequence is that of Cobalamin biosynthesis protein CobD from Dehalococcoides mccartyi (strain CBDB1).